We begin with the raw amino-acid sequence, 304 residues long: Peroxisomal membrane protein 13 (304 aa).

Disordered stretches follow at residues 1–78 and 258–304; these read MASQ…WEQQ and PRKM…VWGN. 2 stretches are compositionally biased toward polar residues: residues 19–44 and 56–67; these read NTSG…SGTA and RPNTAANMNSLS. Positions 262–279 are enriched in low complexity; it reads QQPPQGPNGLPLPHQPHG.

Belongs to the peroxin-13 family. As to quaternary structure, interacts with PEX14; forming the PEX13-PEX14 docking complex. Interacts (via N-terminus) with PEX7, but not with PEX5. Interacts with APEM9 (via N-terminus). In terms of tissue distribution, highly expressed in pollen. Detected in shoots, roots, stems, leaves, inflorescences and emasculated postils. Strongly expressed in both male and female gametophytes during fertilization.

It localises to the peroxisome membrane. Its function is as follows. Component of the PEX13-PEX14 docking complex, a translocon channel that specifically mediates the import of peroxisomal cargo proteins bound to PEX5 receptor. The PEX13-PEX14 docking complex forms a large import pore which can be opened to a diameter of about 9 nm. Mechanistically, PEX5 receptor along with cargo proteins associates with the PEX14 subunit of the PEX13-PEX14 docking complex in the cytosol, leading to the insertion of the receptor into the organelle membrane with the concomitant translocation of the cargo into the peroxisome matrix. Essential for pollen-tube discharge that take place only in the presence of functional peroxisomes in either the male or the female gametophyte. In Arabidopsis thaliana (Mouse-ear cress), this protein is Peroxisomal membrane protein 13.